The sequence spans 514 residues: Flagellin B (514 aa).

The protein belongs to the bacterial flagellin family. As to quaternary structure, heteromer of FlaA and FlaB. FlaB is located proximal to the hook while the remainder of the filament is composed of the predominant FlaA.

Its subcellular location is the secreted. The protein resides in the bacterial flagellum. Its function is as follows. Flagellin is the subunit protein which polymerizes to form the filaments of bacterial flagella. Important for motility and virulence. The protein is Flagellin B (flaB) of Helicobacter pylori (strain J99 / ATCC 700824) (Campylobacter pylori J99).